The sequence spans 27 residues: CD59 glycoprotein (27 aa).

2 disulfide bridges follow: cysteine 3–cysteine 25 and cysteine 6–cysteine 12. Asparagine 17 is a glycosylation site (N-linked (GlcNAc...) asparagine).

Interacts with T-cell surface antigen CD2. In terms of processing, N- and O-glycosylated. In terms of tissue distribution, expressed in erythrocytes and lymphocytes. Not detected in platelets.

The protein localises to the cell membrane. Its subcellular location is the secreted. In terms of biological role, potent inhibitor of the complement membrane attack complex (MAC) action, which protects self-cells from damage during complement activation. Acts by binding to the beta-haipins of C8 (C8A and C8B) components of the assembling MAC, forming an intermolecular beta-sheet that prevents incorporation of the multiple copies of C9 required for complete formation of the osmolytic pore. The chain is CD59 glycoprotein from Ovis aries (Sheep).